A 218-amino-acid chain; its full sequence is Probable nicotinate-nucleotide adenylyltransferase (218 aa).

It belongs to the NadD family.

It catalyses the reaction nicotinate beta-D-ribonucleotide + ATP + H(+) = deamido-NAD(+) + diphosphate. The protein operates within cofactor biosynthesis; NAD(+) biosynthesis; deamido-NAD(+) from nicotinate D-ribonucleotide: step 1/1. Catalyzes the reversible adenylation of nicotinate mononucleotide (NaMN) to nicotinic acid adenine dinucleotide (NaAD). This Corynebacterium glutamicum (strain ATCC 13032 / DSM 20300 / JCM 1318 / BCRC 11384 / CCUG 27702 / LMG 3730 / NBRC 12168 / NCIMB 10025 / NRRL B-2784 / 534) protein is Probable nicotinate-nucleotide adenylyltransferase.